A 480-amino-acid chain; its full sequence is Protein DETOXIFICATION 15 (480 aa).

Helical transmembrane passes span 36-56 (GPLI…VMFV), 69-89 (IATS…ASAM), 118-138 (LLSV…VFFG), 143-163 (IAHL…AYGL), 180-200 (VVIC…VLVL), 208-228 (GAAV…SCYV), 255-275 (LVIP…ELLV), 294-314 (VWMI…NELG), 326-346 (RVVL…LILI), 360-380 (VVSH…LDSF), 396-416 (IGAF…GLLL), and 428-448 (WLGI…ITFF).

It belongs to the multi antimicrobial extrusion (MATE) (TC 2.A.66.1) family.

It is found in the membrane. The polypeptide is Protein DETOXIFICATION 15 (Arabidopsis thaliana (Mouse-ear cress)).